The primary structure comprises 304 residues: Glycine--tRNA ligase alpha subunit (304 aa).

It belongs to the class-II aminoacyl-tRNA synthetase family. Tetramer of two alpha and two beta subunits.

The protein resides in the cytoplasm. It catalyses the reaction tRNA(Gly) + glycine + ATP = glycyl-tRNA(Gly) + AMP + diphosphate. The polypeptide is Glycine--tRNA ligase alpha subunit (Streptococcus agalactiae serotype III (strain NEM316)).